The sequence spans 378 residues: Gibberellin 20 oxidase 2 (378 aa).

A compositionally biased stretch (polar residues) spans 1-10; the sequence is MAILCTTTSP. Residues 1 to 26 form a disordered region; that stretch reads MAILCTTTSPAEKEHEPKQDLEKDQT. The span at 11–25 shows a compositional bias: basic and acidic residues; sequence AEKEHEPKQDLEKDQ. Positions 220-320 constitute a Fe2OG dioxygenase domain; that stretch reads ENDSIMRLNH…RKSMAFFLCP (101 aa). Residues H245, D247, and H301 each coordinate Fe cation. R311 is a catalytic residue.

This sequence belongs to the iron/ascorbate-dependent oxidoreductase family. GA20OX subfamily. It depends on Fe(2+) as a cofactor. The cofactor is L-ascorbate. In terms of tissue distribution, expressed in inflorescence and developing siliques. Detected in seeds, roots, cotyledons and leaves. In seeds, specifically detected at the rim of the embryo and the outer integument.

The catalysed reaction is gibberellin A12 + 2 2-oxoglutarate + 3 O2 + H(+) = gibberellin A9 + 2 succinate + 3 CO2 + 2 H2O. It carries out the reaction gibberellin A12 + 2-oxoglutarate + O2 = gibberellin A15 + succinate + CO2. It catalyses the reaction gibberellin A15 + 2-oxoglutarate + O2 = gibberellin A24 + succinate + CO2 + H2O. The enzyme catalyses gibberellin A53 + 2-oxoglutarate + O2 = gibberellin A44 + succinate + CO2. The catalysed reaction is gibberellin A12 + 3 2-oxoglutarate + 3 O2 = gibberellin A25 + 3 succinate + 3 CO2 + H2O + H(+). It functions in the pathway plant hormone biosynthesis; gibberellin biosynthesis. Key oxidase enzyme in the biosynthesis of gibberellin that catalyzes the conversion of GA12 to GA9, via a three-step oxidation at C-20 of the GA skeleton, and GA25 is also formed as a minor product. GA53 is less effectively oxidized than GA12 and is only oxidized one step to GA44. Involved in the promotion of the floral transition, fertility and silique elongation, but plays only a minor role in elongation of seedling organs. Acts redundantly with GA20OX1. This chain is Gibberellin 20 oxidase 2 (GA20OX2), found in Arabidopsis thaliana (Mouse-ear cress).